We begin with the raw amino-acid sequence, 165 residues long: 2-C-methyl-D-erythritol 2,4-cyclodiphosphate synthase (165 aa).

Positions 11 and 13 each coordinate a divalent metal cation. Residues 11 to 13 (DVH) and 40 to 41 (HS) contribute to the 4-CDP-2-C-methyl-D-erythritol 2-phosphate site. An a divalent metal cation-binding site is contributed by H48. 4-CDP-2-C-methyl-D-erythritol 2-phosphate contacts are provided by residues 62-64 (DIG), 67-71 (FPDTD), 137-140 (TTSE), F144, and R147.

This sequence belongs to the IspF family. In terms of assembly, homotrimer. A divalent metal cation serves as cofactor.

It carries out the reaction 4-CDP-2-C-methyl-D-erythritol 2-phosphate = 2-C-methyl-D-erythritol 2,4-cyclic diphosphate + CMP. The protein operates within isoprenoid biosynthesis; isopentenyl diphosphate biosynthesis via DXP pathway; isopentenyl diphosphate from 1-deoxy-D-xylulose 5-phosphate: step 4/6. Involved in the biosynthesis of isopentenyl diphosphate (IPP) and dimethylallyl diphosphate (DMAPP), two major building blocks of isoprenoid compounds. Catalyzes the conversion of 4-diphosphocytidyl-2-C-methyl-D-erythritol 2-phosphate (CDP-ME2P) to 2-C-methyl-D-erythritol 2,4-cyclodiphosphate (ME-CPP) with a corresponding release of cytidine 5-monophosphate (CMP). This Rubrobacter xylanophilus (strain DSM 9941 / JCM 11954 / NBRC 16129 / PRD-1) protein is 2-C-methyl-D-erythritol 2,4-cyclodiphosphate synthase.